The chain runs to 436 residues: MRIVVLGAGVVGVTSAYELARAGHEVTVVDRQPAAALETSFANAGEISPGYASPWAAPGIPAKALRWMFMKHAPLVIRPRLDAAQVRFLLAILRNCTPAAYAQNKGRMVRLAEYSRDCLTDLRATTGLAFDERQQGTLQLFRSQKQLDAAARDIEVLRAGGVPFELLDADGCLAAEPGLRAARDRIAGGLRLTGDETGDCFKFTQGLAGLAEEGGVRFRYGTGVERLRVEGGRVTGVETTKGTFLADAVVVALGSHSPALVAPLGLRLPVYPVKGYSITVPIVDADRAPVSTVMDETYKIAITRLGTRIRVGGMAEVAGFSATLPPARRETLAMSVNDLFGGAGDLSRASFWTGLRPMTPDGTPVVGRTPVAGLWLNTGHGTLGWTMAAGSARVLSDLIDGRAPEIESADLGIERYAAPGRRARPAVRLNPARQAG.

3-17 (IVVLGAGVVGVTSAY) contributes to the FAD binding site.

This sequence belongs to the DadA oxidoreductase family. The cofactor is FAD.

It catalyses the reaction a D-alpha-amino acid + A + H2O = a 2-oxocarboxylate + AH2 + NH4(+). Its pathway is amino-acid degradation; D-alanine degradation; NH(3) and pyruvate from D-alanine: step 1/1. Its function is as follows. Oxidative deamination of D-amino acids. The sequence is that of D-amino acid dehydrogenase from Cereibacter sphaeroides (strain ATCC 17023 / DSM 158 / JCM 6121 / CCUG 31486 / LMG 2827 / NBRC 12203 / NCIMB 8253 / ATH 2.4.1.) (Rhodobacter sphaeroides).